A 324-amino-acid polypeptide reads, in one-letter code: Methionyl-tRNA formyltransferase (324 aa).

114 to 117 (SLLP) is a (6S)-5,6,7,8-tetrahydrofolate binding site.

Belongs to the Fmt family.

The catalysed reaction is L-methionyl-tRNA(fMet) + (6R)-10-formyltetrahydrofolate = N-formyl-L-methionyl-tRNA(fMet) + (6S)-5,6,7,8-tetrahydrofolate + H(+). Attaches a formyl group to the free amino group of methionyl-tRNA(fMet). The formyl group appears to play a dual role in the initiator identity of N-formylmethionyl-tRNA by promoting its recognition by IF2 and preventing the misappropriation of this tRNA by the elongation apparatus. This chain is Methionyl-tRNA formyltransferase, found in Parabacteroides distasonis (strain ATCC 8503 / DSM 20701 / CIP 104284 / JCM 5825 / NCTC 11152).